We begin with the raw amino-acid sequence, 277 residues long: MEMO1 family protein MTH_45 (277 aa).

The protein belongs to the MEMO1 family.

In Methanothermobacter thermautotrophicus (strain ATCC 29096 / DSM 1053 / JCM 10044 / NBRC 100330 / Delta H) (Methanobacterium thermoautotrophicum), this protein is MEMO1 family protein MTH_45.